Here is a 498-residue protein sequence, read N- to C-terminus: Glycerol kinase (498 aa).

ADP is bound at residue threonine 12. 3 residues coordinate ATP: threonine 12, threonine 13, and serine 14. Residue threonine 12 coordinates sn-glycerol 3-phosphate. Arginine 16 provides a ligand contact to ADP. The sn-glycerol 3-phosphate site is built by arginine 82, tyrosine 134, and aspartate 243. Glycerol-binding residues include arginine 82, tyrosine 134, aspartate 243, and glutamine 244. ADP contacts are provided by threonine 265 and glycine 308. ATP-binding residues include threonine 265, glycine 308, glutamine 312, and glycine 411. Glycine 411 contacts ADP.

Belongs to the FGGY kinase family.

It carries out the reaction glycerol + ATP = sn-glycerol 3-phosphate + ADP + H(+). The protein operates within polyol metabolism; glycerol degradation via glycerol kinase pathway; sn-glycerol 3-phosphate from glycerol: step 1/1. With respect to regulation, inhibited by fructose 1,6-bisphosphate (FBP). Functionally, key enzyme in the regulation of glycerol uptake and metabolism. Catalyzes the phosphorylation of glycerol to yield sn-glycerol 3-phosphate. The polypeptide is Glycerol kinase (Brucella suis (strain ATCC 23445 / NCTC 10510)).